A 753-amino-acid chain; its full sequence is Nigerose phosphorylase (753 aa).

A substrate-binding site is contributed by 348–349; that stretch reads WD. Glutamate 490 functions as the Proton donor in the catalytic mechanism. Residue 604–605 participates in substrate binding; the sequence is KQ.

It belongs to the glycosyl hydrolase 65 family. As to quaternary structure, homodimer.

Its subcellular location is the cytoplasm. It catalyses the reaction nigerose + phosphate = beta-D-glucose 1-phosphate + D-glucose. Its activity is regulated as follows. Does not require divalent metal ions. Functionally, catalyzes the reversible phosphorolysis of nigerose. Also shows a weak activity on kojibiose. The polypeptide is Nigerose phosphorylase (Lachnoclostridium phytofermentans (strain ATCC 700394 / DSM 18823 / ISDg) (Clostridium phytofermentans)).